A 369-amino-acid chain; its full sequence is MPERDPILLTPGPLTTSRMTRDAMLRDWGSWDAAFNRLTKSVCADLVRIAGGGDAYVCVPLQGSGTFAVEATLGTLVPRDARVLVPNNGAYCARIAAILRRLGIAHVELPFAEDEPASAHAIDAALARDARLTHVALVHLETSAGLLNPLDDIAAVCRARGRALIVDAMSSFGALPIALAASDIDALISASGKCLEGVPGMGFAIVRRSALEAAEGRSPSVALDLHDQYAYMQRTSQWRFTPPTHVLAALRAALDQFFDEGGQPARGARYARNCATLVDGMRALGFEPFLDARAQASVIVTFYAPADPAYAFPAFYAAVRDAGYVLYPGKLTTADTFRVGCIGALGADEMRGAVAAIGGALESLGIAMR.

Lys-193 bears the N6-(pyridoxal phosphate)lysine mark.

It belongs to the class-V pyridoxal-phosphate-dependent aminotransferase family. PhnW subfamily. In terms of assembly, homodimer. It depends on pyridoxal 5'-phosphate as a cofactor.

The enzyme catalyses (2-aminoethyl)phosphonate + pyruvate = phosphonoacetaldehyde + L-alanine. Involved in phosphonate degradation. This chain is 2-aminoethylphosphonate--pyruvate transaminase, found in Burkholderia pseudomallei (strain K96243).